The primary structure comprises 111 residues: Ig kappa chain V-III region PC 7769 (111 aa).

Residues 1 to 23 (DIVLTQSPASLAVSLGQRATISC) are framework-1. Cysteines 23 and 92 form a disulfide. Residues 24–38 (KASQSVDYDGDSYMN) form a complementarity-determining-1 region. The interval 39 to 53 (WYQQKPGQPPKVLIF) is framework-2. The interval 54–60 (AASNLES) is complementarity-determining-2. Residues 61–92 (GIPARFSGSGSGTDFTLNIHPVEEEDAATYYC) form a framework-3 region. The interval 93 to 101 (QQSNEDPWT) is complementarity-determining-3. Residues 102–111 (FGSGTKLEIK) are framework-4.

The chain is Ig kappa chain V-III region PC 7769 from Mus musculus (Mouse).